The chain runs to 131 residues: Squamosa promoter-binding protein 1 (131 aa).

The span at 1–10 shows a compositional bias: basic and acidic residues; sequence MDTSKGEGKR. The segment at 1–52 is disordered; the sequence is MDTSKGEGKRVIKLPGSQEQGEEEDDIGEDSKKTRALTPSGKRASGSTQRSC. The segment at 49–126 adopts an SBP-type zinc-finger fold; sequence QRSCQVENCA…AGHNERRRKS (78 aa). Residues Cys52, Cys57, Cys74, His77, Cys93, Cys96, His100, and Cys112 each coordinate Zn(2+). A Bipartite nuclear localization signal motif is present at residues 109–125; the sequence is KRSCRRRLAGHNERRRK.

The protein localises to the nucleus. Its function is as follows. Probable transcriptional factor. Binds to the promoter of the SQUAMOSA gene. The protein is Squamosa promoter-binding protein 1 (SBP1) of Antirrhinum majus (Garden snapdragon).